Reading from the N-terminus, the 745-residue chain is Cullin-2 (745 aa).

N6-acetyllysine is present on Lys-393. Thr-661 bears the Phosphothreonine mark. The Cullin neddylation domain occupies 675 to 735 (DRKMYLQAAI…IDKQYIERSQ (61 aa)). Lys-689 participates in a covalent cross-link: Glycyl lysine isopeptide (Lys-Gly) (interchain with G-Cter in NEDD8).

It belongs to the cullin family. As to quaternary structure, component of multiple Cul2-RING (CRL2) E3 ubiquitin-protein ligase complexes consisting of CUL2, Elongin BC (ELOB and ELOC), RBX1 and a variable substrate-specific adapter; this complex is also known as ECS (Elongin BC-CUL2/5-SOCS-box protein) complex and may consist of CUL2 or CUL5. Component of the ECS(VHL) or CBC(VHL) complex containing CUL2, RBX1, ELOB, ELOC and VHL. Component of the ECS(MED8) complex with the probable substrate recognition component MED8. Component of multiple ECS complexes part of the DesCEND (destruction via C-end degrons) pathway, which contain either KLHDC2, KLHDC3, KLHDC10, APPBP2, FEM1A, FEM1B or FEM1C as substrate-recognition component. Component of the ECS(LRR1) complex with the substrate recognition component LRR1. Component of a CRL2(FEM1B) complex containing CUL2, RBX1, ELOB, ELOC and FEM1B. Component of a CRL2(FEM1C) complex containing CUL2, RBX1, ELOB, ELOC and FEM1C. Part of an E3 ubiquitin-protein ligase complex including ZYG11B, CUL2 and Elongin BC. Part of an E3 ubiquitin-protein ligase complex including ZER1, CUL2 and Elongin BC. Interacts with RBX1, RNF7, FEM1B and TIP120A/CAND1. Found in a complex composed of LIMD1, VHL, EGLN1/PHD2, ELOB and CUL2. Interacts (when neddylated) with ARIH1; leading to activate the E3 ligase activity of ARIH1. Interacts (unneddylated form) with DCUN1D1, DCUN1D2, DCUN1D3, DCUN1D4 and DCUN1D5; these interactions promote the cullin neddylation. Component of VCB (elongins BC/CUL2/VHL) complex that contains at least DCUN1D1, CUL2 and VHL; this complex triggers CUL2 neddylation and consequently cullin ring ligase (CRL) substrates polyubiquitylation. Post-translationally, neddylated; which enhances the ubiquitination activity of ECS (Elongin BC-CUL2/5-SOCS-box protein) E3 ubiquitin-protein ligase complexes. Neddylation leads to structural rearrangment in the complex that allows interaction between the E2 ubiquitin-conjugating enzyme and the acceptor ubiquitin. CBC(VHL) complex formation seems to promote neddylation. Deneddylated via its interaction with the COP9 signalosome (CSN) complex.

The protein resides in the nucleus. Its pathway is protein modification; protein ubiquitination. Functionally, core component of multiple cullin-RING-based ECS (ElonginB/C-CUL2/5-SOCS-box protein) E3 ubiquitin-protein ligase complexes, which mediate the ubiquitination of target proteins. CUL2 may serve as a rigid scaffold in the complex and may contribute to catalysis through positioning of the substrate and the ubiquitin-conjugating enzyme. The E3 ubiquitin-protein ligase activity of the complex is dependent on the neddylation of the cullin subunit and is inhibited by the association of the deneddylated cullin subunit with TIP120A/CAND1. The functional specificity of the ECS complex depends on the substrate recognition component. ECS(VHL) mediates the ubiquitination of hypoxia-inducible factor (HIF). A number of ECS complexes (containing either KLHDC2, KLHDC3, KLHDC10, APPBP2, FEM1A, FEM1B or FEM1C as substrate-recognition component) are part of the DesCEND (destruction via C-end degrons) pathway, which recognizes a C-degron located at the extreme C terminus of target proteins, leading to their ubiquitination and degradation. ECS complexes and ARIH1 collaborate in tandem to mediate ubiquitination of target proteins. ECS(LRR1) ubiquitinates MCM7 and promotes CMG replisome disassembly by VCP and chromatin extraction during S-phase. The sequence is that of Cullin-2 (CUL2) from Pongo abelii (Sumatran orangutan).